A 726-amino-acid chain; its full sequence is Peroxisomal bifunctional enzyme (726 aa).

Residues 1–284 (MAEYLRLPHS…FAERSAPKWS (284 aa)) form an enoyl-CoA hydratase / isomerase region. Lys38 bears the N6-succinyllysine mark. Gly103 is a binding site for substrate. Lys167 carries the N6-acetyllysine; alternate modification. Lys167 carries the post-translational modification N6-succinyllysine; alternate. Lys173 is modified (N6-acetyllysine). Lys185 is subject to N6-succinyllysine. Lys221 bears the N6-acetyllysine; alternate mark. At Lys221 the chain carries N6-succinyllysine; alternate. Lys282, Lys292, and Lys333 each carry N6-succinyllysine. Residues 285–575 (TPSGASWKTA…DMLCELGRFG (291 aa)) are 3-hydroxyacyl-CoA dehydrogenase. An N6-acetyllysine mark is found at Lys348 and Lys352. The segment at 352–371 (KSRQQCGQQRSGPKPRFSSS) is disordered. The span at 353–371 (SRQQCGQQRSGPKPRFSSS) shows a compositional bias: polar residues. Residue Lys467 is modified to N6-acetyllysine. Lys535 carries the N6-succinyllysine modification. Residues Lys587, Lys594, and Lys713 each carry the N6-acetyllysine; alternate modification. 3 positions are modified to N6-succinyllysine; alternate: Lys587, Lys594, and Lys713. The short motif at 724-726 (SKL) is the Microbody targeting signal element. At Lys725 the chain carries N6-succinyllysine.

In the N-terminal section; belongs to the enoyl-CoA hydratase/isomerase family. The protein in the C-terminal section; belongs to the 3-hydroxyacyl-CoA dehydrogenase family. In terms of assembly, monomer. Post-translationally, acetylated, leading to enhanced enzyme activity. Acetylation is enhanced by up to 80% after treatment either with trichostin A (TSA) or with nicotinamide (NAM) with highest increase on Lys-348. Acetylation and enzyme activity increased by about 1.5% on addition of fatty acids.

Its subcellular location is the peroxisome. The enzyme catalyses a (3S)-3-hydroxyacyl-CoA = a (2E)-enoyl-CoA + H2O. It carries out the reaction a 4-saturated-(3S)-3-hydroxyacyl-CoA = a (3E)-enoyl-CoA + H2O. It catalyses the reaction a (3Z)-enoyl-CoA = a 4-saturated (2E)-enoyl-CoA. The catalysed reaction is a (3E)-enoyl-CoA = a 4-saturated (2E)-enoyl-CoA. The enzyme catalyses a (3S)-3-hydroxyacyl-CoA + NAD(+) = a 3-oxoacyl-CoA + NADH + H(+). It carries out the reaction (2S,3S)-3-hydroxy-2-methylbutanoyl-CoA = (2E)-2-methylbut-2-enoyl-CoA + H2O. It catalyses the reaction (3S)-hydroxyhexadecanoyl-CoA + NAD(+) = 3-oxohexadecanoyl-CoA + NADH + H(+). The catalysed reaction is (3S)-hydroxyhexadecanoyl-CoA = (2E)-hexadecenoyl-CoA + H2O. The enzyme catalyses (2E)-hexadecenedioyl-CoA + H2O = (3S)-hydroxyhexadecanedioyl-CoA. It carries out the reaction (3S)-hydroxyhexadecanedioyl-CoA + NAD(+) = 3-oxohexadecanedioyl-CoA + NADH + H(+). It catalyses the reaction (3E,5Z)-tetradecadienoyl-CoA = (2E,5Z)-tetradecadienoyl-CoA. The catalysed reaction is (3E,5Z)-octadienoyl-CoA = (2E,5Z)-octadienoyl-CoA. The enzyme catalyses (3S)-hydroxydecanoyl-CoA + NAD(+) = 3-oxodecanoyl-CoA + NADH + H(+). It carries out the reaction (3E)-decenoyl-CoA = (2E)-decenoyl-CoA. It catalyses the reaction (3Z)-hexenoyl-CoA = (2E)-hexenoyl-CoA. The catalysed reaction is (3E)-hexenoyl-CoA = (2E)-hexenoyl-CoA. The enzyme catalyses (3S)-hydroxydecanoyl-CoA = (2E)-decenoyl-CoA + H2O. It carries out the reaction (3S)-hydroxyhexanoyl-CoA = (2E)-hexenoyl-CoA + H2O. It participates in lipid metabolism; fatty acid beta-oxidation. Enzyme activity enhanced by acetylation. Functionally, peroxisomal trifunctional enzyme possessing 2-enoyl-CoA hydratase, 3-hydroxyacyl-CoA dehydrogenase, and delta 3, delta 2-enoyl-CoA isomerase activities. Catalyzes two of the four reactions of the long chain fatty acids peroxisomal beta-oxidation pathway. Can also use branched-chain fatty acids such as 2-methyl-2E-butenoyl-CoA as a substrate, which is hydrated into (2S,3S)-3-hydroxy-2-methylbutanoyl-CoA. Optimal isomerase for 2,5 double bonds into 3,5 form isomerization in a range of enoyl-CoA species. Also able to isomerize both 3-cis and 3-trans double bonds into the 2-trans form in a range of enoyl-CoA species. Regulates the amount of medium-chain dicarboxylic fatty acids which are essential regulators of all fatty acid oxidation pathways. Also involved in the degradation of long-chain dicarboxylic acids through peroxisomal beta-oxidation. The chain is Peroxisomal bifunctional enzyme (EHHADH) from Cavia porcellus (Guinea pig).